A 368-amino-acid polypeptide reads, in one-letter code: MFLSLRPSLSVSRLAVVRRAYSSPASKKQINDGLVPLPHKEVIDMAFDLHLPERSVIGKLPYHSPEPIIFFHGLLGSKRNYKHDCKKLATALQTPVYTVDVRNHGSSEHALPFNYGTLVNDLVHFIHQHKLGKVNIIGYSLGAKVGMLACLKHPELFSAACIIDNAPEPQPHIKAFLSTLIKSCVKLLDQGKVRVDDKLWRHKASESLKRYLPNAGVRNYVLNNIVHNPRVVEYRSPVINYDDGLIHFKNPVRHMLDCGVKDVADWPTEEVKDKKFLGPVNFIRATKSAFINPDSLKAINSFFPFNNIHEINATHFVLNERPQEYLRAVIDFFKVTRYQLENKRNKDPNNYMQTQNSISNSDTMGQSL.

A mitochondrion-targeting transit peptide spans 1 to 21 (MFLSLRPSLSVSRLAVVRRAY). Residues 67 to 171 (PIIFFHGLLG…IIDNAPEPQP (105 aa)) form the AB hydrolase-1 domain. Catalysis depends on charge relay system residues S140, D164, and H315. The tract at residues 344–368 (RNKDPNNYMQTQNSISNSDTMGQSL) is disordered. Over residues 348 to 368 (PNNYMQTQNSISNSDTMGQSL) the composition is skewed to polar residues.

Belongs to the AB hydrolase superfamily.

It is found in the mitochondrion. It carries out the reaction ethanol + acetyl-CoA = ethyl acetate + CoA. It catalyses the reaction acetyl-CoA + H2O = acetate + CoA + H(+). The enzyme catalyses ethyl acetate + H2O = ethanol + acetate + H(+). Alcohol acetyltransferase that catalyzes the synthesis of ethyl acetate from ethanol and acetyl-CoA. Can also function as a thioesterase by hydrolyzing acetyl-CoA in the absence of ethanol, as well as esterase hydrolyzing ethyl acetate. The chain is Ethanol acetyltransferase 1 (EAT1) from Kluyveromyces lactis (strain ATCC 8585 / CBS 2359 / DSM 70799 / NBRC 1267 / NRRL Y-1140 / WM37) (Yeast).